An 86-amino-acid polypeptide reads, in one-letter code: Large ribosomal subunit protein bL27 (86 aa).

The segment covering Met1 to Thr10 has biased composition (gly residues). The disordered stretch occupies residues Met1–Leu21.

The protein belongs to the bacterial ribosomal protein bL27 family.

The sequence is that of Large ribosomal subunit protein bL27 from Bordetella petrii (strain ATCC BAA-461 / DSM 12804 / CCUG 43448).